A 354-amino-acid chain; its full sequence is Uroporphyrinogen decarboxylase (354 aa).

Residues 27 to 31 (RQAGR), Phe-46, Asp-77, Tyr-154, Thr-209, and His-327 contribute to the substrate site.

It belongs to the uroporphyrinogen decarboxylase family. In terms of assembly, homodimer.

The protein localises to the cytoplasm. It carries out the reaction uroporphyrinogen III + 4 H(+) = coproporphyrinogen III + 4 CO2. Its pathway is porphyrin-containing compound metabolism; protoporphyrin-IX biosynthesis; coproporphyrinogen-III from 5-aminolevulinate: step 4/4. Functionally, catalyzes the decarboxylation of four acetate groups of uroporphyrinogen-III to yield coproporphyrinogen-III. This Pseudomonas putida (strain ATCC 47054 / DSM 6125 / CFBP 8728 / NCIMB 11950 / KT2440) protein is Uroporphyrinogen decarboxylase.